The chain runs to 231 residues: Large ribosomal subunit protein uL1 (231 aa).

Belongs to the universal ribosomal protein uL1 family. As to quaternary structure, part of the 50S ribosomal subunit.

Binds directly to 23S rRNA. The L1 stalk is quite mobile in the ribosome, and is involved in E site tRNA release. Its function is as follows. Protein L1 is also a translational repressor protein, it controls the translation of the L11 operon by binding to its mRNA. The sequence is that of Large ribosomal subunit protein uL1 from Allorhizobium ampelinum (strain ATCC BAA-846 / DSM 112012 / S4) (Agrobacterium vitis (strain S4)).